Reading from the N-terminus, the 445-residue chain is Maltoporin (445 aa).

Positions 1–25 are cleaved as a signal peptide; that stretch reads MKMKAKWLPIAAGVTAALASQAAFA.

It belongs to the porin LamB (TC 1.B.3) family. Homotrimer formed of three 18-stranded antiparallel beta-barrels, containing three independent channels.

Its subcellular location is the cell outer membrane. The catalysed reaction is beta-maltose(in) = beta-maltose(out). Functionally, involved in the transport of maltose and maltodextrins. This Aeromonas salmonicida protein is Maltoporin.